Consider the following 420-residue polypeptide: tRNA (guanine-N(7)-)-methyltransferase non-catalytic subunit TRM82 (420 aa).

Residues 59–68 (KENDSKRQKS) are compositionally biased toward basic and acidic residues. The segment at 59 to 82 (KENDSKRQKSESGQAKVSKIPTPG) is disordered. WD repeat units lie at residues 87-127 (PIYN…DNCL), 179-220 (GHVS…VIKN), 224-266 (GHHE…AKIE), and 340-379 (SYED…EETN).

Belongs to the WD repeat TRM82 family. In terms of assembly, forms a heterodimer with the catalytic subunit TRM8.

The protein resides in the nucleus. The protein operates within tRNA modification; N(7)-methylguanine-tRNA biosynthesis. Required for the formation of N(7)-methylguanine at position 46 (m7G46) in tRNA. In the complex, it is required to stabilize and induce conformational changes of the catalytic subunit. The chain is tRNA (guanine-N(7)-)-methyltransferase non-catalytic subunit TRM82 from Meyerozyma guilliermondii (strain ATCC 6260 / CBS 566 / DSM 6381 / JCM 1539 / NBRC 10279 / NRRL Y-324) (Yeast).